The following is a 106-amino-acid chain: UPF0060 membrane protein Oant_2511 (106 aa).

4 helical membrane-spanning segments follow: residues 3-23 (FAIY…FWAW), 30-50 (PLWL…LTLI), 60-80 (AAYG…AEGA), and 84-104 (RWDV…LFAP).

The protein belongs to the UPF0060 family.

The protein resides in the cell inner membrane. The protein is UPF0060 membrane protein Oant_2511 of Brucella anthropi (strain ATCC 49188 / DSM 6882 / CCUG 24695 / JCM 21032 / LMG 3331 / NBRC 15819 / NCTC 12168 / Alc 37) (Ochrobactrum anthropi).